A 383-amino-acid polypeptide reads, in one-letter code: Succinyl-diaminopimelate desuccinylase (383 aa).

Residue His-73 participates in Zn(2+) binding. Asp-75 is a catalytic residue. Asp-107 serves as a coordination point for Zn(2+). Catalysis depends on Glu-141, which acts as the Proton acceptor. Residues Glu-142, Glu-170, and His-356 each coordinate Zn(2+).

Belongs to the peptidase M20A family. DapE subfamily. In terms of assembly, homodimer. It depends on Zn(2+) as a cofactor. The cofactor is Co(2+).

The catalysed reaction is N-succinyl-(2S,6S)-2,6-diaminopimelate + H2O = (2S,6S)-2,6-diaminopimelate + succinate. Its pathway is amino-acid biosynthesis; L-lysine biosynthesis via DAP pathway; LL-2,6-diaminopimelate from (S)-tetrahydrodipicolinate (succinylase route): step 3/3. Catalyzes the hydrolysis of N-succinyl-L,L-diaminopimelic acid (SDAP), forming succinate and LL-2,6-diaminopimelate (DAP), an intermediate involved in the bacterial biosynthesis of lysine and meso-diaminopimelic acid, an essential component of bacterial cell walls. The polypeptide is Succinyl-diaminopimelate desuccinylase (Pseudomonas syringae pv. tomato (strain ATCC BAA-871 / DC3000)).